A 206-amino-acid chain; its full sequence is Large ribosomal subunit protein uL4 (206 aa).

The disordered stretch occupies residues threonine 48–tyrosine 97. Basic residues predominate over residues lysine 63 to arginine 72.

Belongs to the universal ribosomal protein uL4 family. As to quaternary structure, part of the 50S ribosomal subunit.

Its function is as follows. One of the primary rRNA binding proteins, this protein initially binds near the 5'-end of the 23S rRNA. It is important during the early stages of 50S assembly. It makes multiple contacts with different domains of the 23S rRNA in the assembled 50S subunit and ribosome. In terms of biological role, forms part of the polypeptide exit tunnel. This chain is Large ribosomal subunit protein uL4, found in Anaeromyxobacter dehalogenans (strain 2CP-C).